A 561-amino-acid chain; its full sequence is Dihydroxy-acid dehydratase 3 (561 aa).

Cys50 contacts [2Fe-2S] cluster. A Mg(2+)-binding site is contributed by Asp82. Cys123 is a [2Fe-2S] cluster binding site. Mg(2+)-binding residues include Asp124 and Lys125. Lys125 carries the post-translational modification N6-carboxylysine. A [2Fe-2S] cluster-binding site is contributed by Cys195. Glu447 serves as a coordination point for Mg(2+). Residue Ser473 is the Proton acceptor of the active site.

It belongs to the IlvD/Edd family. In terms of assembly, homodimer. It depends on [2Fe-2S] cluster as a cofactor. The cofactor is Mg(2+).

It carries out the reaction (2R)-2,3-dihydroxy-3-methylbutanoate = 3-methyl-2-oxobutanoate + H2O. The enzyme catalyses (2R,3R)-2,3-dihydroxy-3-methylpentanoate = (S)-3-methyl-2-oxopentanoate + H2O. The protein operates within amino-acid biosynthesis; L-isoleucine biosynthesis; L-isoleucine from 2-oxobutanoate: step 3/4. Its pathway is amino-acid biosynthesis; L-valine biosynthesis; L-valine from pyruvate: step 3/4. In terms of biological role, functions in the biosynthesis of branched-chain amino acids. Catalyzes the dehydration of (2R,3R)-2,3-dihydroxy-3-methylpentanoate (2,3-dihydroxy-3-methylvalerate) into 2-oxo-3-methylpentanoate (2-oxo-3-methylvalerate) and of (2R)-2,3-dihydroxy-3-methylbutanoate (2,3-dihydroxyisovalerate) into 2-oxo-3-methylbutanoate (2-oxoisovalerate), the penultimate precursor to L-isoleucine and L-valine, respectively. The polypeptide is Dihydroxy-acid dehydratase 3 (Bordetella bronchiseptica (strain ATCC BAA-588 / NCTC 13252 / RB50) (Alcaligenes bronchisepticus)).